The sequence spans 83 residues: Cytochrome b559 subunit alpha (83 aa).

The chain crosses the membrane as a helical span at residues isoleucine 21–tryptophan 35. Histidine 23 contacts heme.

It belongs to the PsbE/PsbF family. In terms of assembly, heterodimer of an alpha subunit and a beta subunit. PSII is composed of 1 copy each of membrane proteins PsbA, PsbB, PsbC, PsbD, PsbE, PsbF, PsbH, PsbI, PsbJ, PsbK, PsbL, PsbM, PsbT, PsbX, PsbY, PsbZ, Psb30/Ycf12, at least 3 peripheral proteins of the oxygen-evolving complex and a large number of cofactors. It forms dimeric complexes. Heme b is required as a cofactor.

It is found in the plastid. The protein localises to the chloroplast thylakoid membrane. Its function is as follows. This b-type cytochrome is tightly associated with the reaction center of photosystem II (PSII). PSII is a light-driven water:plastoquinone oxidoreductase that uses light energy to abstract electrons from H(2)O, generating O(2) and a proton gradient subsequently used for ATP formation. It consists of a core antenna complex that captures photons, and an electron transfer chain that converts photonic excitation into a charge separation. The chain is Cytochrome b559 subunit alpha from Lotus japonicus (Lotus corniculatus var. japonicus).